We begin with the raw amino-acid sequence, 168 residues long: Ubiquitin-conjugating enzyme E2 2 (168 aa).

The UBC core domain maps to 4-150 (PAKRRLMRDF…VRETVENSWN (147 aa)). Catalysis depends on cysteine 88, which acts as the Glycyl thioester intermediate. Residues 143–168 (ETVENSWNEDDEDEDEDEDEDIDDAE) form a disordered region. The span at 149–168 (WNEDDEDEDEDEDEDIDDAE) shows a compositional bias: acidic residues.

The protein belongs to the ubiquitin-conjugating enzyme family.

The protein localises to the cytoplasm. It localises to the nucleus. The catalysed reaction is S-ubiquitinyl-[E1 ubiquitin-activating enzyme]-L-cysteine + [E2 ubiquitin-conjugating enzyme]-L-cysteine = [E1 ubiquitin-activating enzyme]-L-cysteine + S-ubiquitinyl-[E2 ubiquitin-conjugating enzyme]-L-cysteine.. It participates in protein modification; protein ubiquitination. Its function is as follows. Catalyzes the covalent attachment of ubiquitin to other proteins. Plays a role in transcription regulation by catalyzing the monoubiquitination of histone H2B to form H2BK123ub1. H2BK123ub1 gives a specific tag for epigenetic transcriptional activation and is also a prerequisite for H3K4me and H3K79me formation. Also involved in postreplication repair of UV-damaged DNA, in N-end rule-dependent protein degradation and in sporulation. This Debaryomyces hansenii (strain ATCC 36239 / CBS 767 / BCRC 21394 / JCM 1990 / NBRC 0083 / IGC 2968) (Yeast) protein is Ubiquitin-conjugating enzyme E2 2 (UBC2).